The sequence spans 893 residues: Valine--tRNA ligase (893 aa).

The 'HIGH' region signature appears at 57 to 67; that stretch reads PNVTGTLHMGH. Positions 545 to 549 match the 'KMSKS' region motif; the sequence is KMSKS. Lys-548 serves as a coordination point for ATP. Residues 821-855 are a coiled coil; that stretch reads TSGSVDLEAERKRLEKDLAAAQKELATTEGKLGNE.

Belongs to the class-I aminoacyl-tRNA synthetase family. ValS type 1 subfamily. In terms of assembly, monomer.

It localises to the cytoplasm. The catalysed reaction is tRNA(Val) + L-valine + ATP = L-valyl-tRNA(Val) + AMP + diphosphate. Functionally, catalyzes the attachment of valine to tRNA(Val). As ValRS can inadvertently accommodate and process structurally similar amino acids such as threonine, to avoid such errors, it has a 'posttransfer' editing activity that hydrolyzes mischarged Thr-tRNA(Val) in a tRNA-dependent manner. The chain is Valine--tRNA ligase from Nocardia farcinica (strain IFM 10152).